We begin with the raw amino-acid sequence, 161 residues long: Alpha-crystallin A chain (161 aa).

Residues 1–51 form a required for complex formation with BFSP1 and BFSP2 region; it reads ALGPFYPSRXXXXXXXXXXXXXXXXXXXXXXXXXXXXQSLFRTVLDSGISE. Residue Gln38 is modified to Deamidated glutamine; partial. The sHSP domain occupies 40-150; it reads LFRTVLDSGI…SHSERAIPVS (111 aa). At Lys87 the chain carries N6-acetyllysine. His88 lines the Zn(2+) pocket. Asn89 bears the Deamidated asparagine; partial mark. Zn(2+) contacts are provided by Glu90 and His95. At Ser110 the chain carries Phosphoserine. The residue at position 111 (Asn111) is a Deamidated asparagine; partial. Residues Cys119 and Cys130 are joined by a disulfide bond. Gln135 is subject to Deamidated glutamine; partial. The segment at 140–161 is disordered; the sequence is ASHSERAIPVSREEKPSSAPSS. Over residues 141–155 the composition is skewed to basic and acidic residues; sequence SHSERAIPVSREEKP. His142 contacts Zn(2+). Ser150 carries O-linked (GlcNAc) serine glycosylation.

Belongs to the small heat shock protein (HSP20) family. In terms of assembly, heteromer composed of three CRYAA and one CRYAB subunits. Inter-subunit bridging via zinc ions enhances stability, which is crucial as there is no protein turn over in the lens. Can also form homodimers and homotetramers (dimers of dimers) which serve as the building blocks of homooligomers. Within homooligomers, the zinc-binding motif is created from residues of 3 different molecules. His-88 and Glu-90 from one molecule are ligands of the zinc ion, and His-95 and His-142 residues from additional molecules complete the site with tetrahedral coordination geometry. Part of a complex required for lens intermediate filament formation composed of BFSP1, BFSP2 and CRYAA. In terms of processing, undergoes age-dependent proteolytical cleavage at the C-terminus.

The protein resides in the cytoplasm. The protein localises to the nucleus. Contributes to the transparency and refractive index of the lens. In its oxidized form (absence of intramolecular disulfide bond), acts as a chaperone, preventing aggregation of various proteins under a wide range of stress conditions. Required for the correct formation of lens intermediate filaments as part of a complex composed of BFSP1, BFSP2 and CRYAA. The polypeptide is Alpha-crystallin A chain (CRYAA) (Galegeeska rufescens (East African rufous sengi)).